Reading from the N-terminus, the 543-residue chain is CTP synthase (543 aa).

The amidoligase domain stretch occupies residues 1-265 (MTRFIFVTGG…DQIVLDKFGL (265 aa)). Residue serine 13 coordinates CTP. A UTP-binding site is contributed by serine 13. ATP contacts are provided by residues 14-19 (SLGKGI) and aspartate 71. 2 residues coordinate Mg(2+): aspartate 71 and glutamate 139. Residues 146–148 (DIE), 186–191 (KTKPTQ), and lysine 222 contribute to the CTP site. Residues 186-191 (KTKPTQ) and lysine 222 contribute to the UTP site. Residues 290–541 (TIAMVGKYMD…IQAAVEQNER (252 aa)) enclose the Glutamine amidotransferase type-1 domain. L-glutamine is bound at residue glycine 351. Cysteine 378 acts as the Nucleophile; for glutamine hydrolysis in catalysis. L-glutamine is bound by residues 379–382 (LGMQ), glutamate 402, and arginine 469. Catalysis depends on residues histidine 514 and glutamate 516.

This sequence belongs to the CTP synthase family. In terms of assembly, homotetramer.

The catalysed reaction is UTP + L-glutamine + ATP + H2O = CTP + L-glutamate + ADP + phosphate + 2 H(+). The enzyme catalyses L-glutamine + H2O = L-glutamate + NH4(+). It carries out the reaction UTP + NH4(+) + ATP = CTP + ADP + phosphate + 2 H(+). The protein operates within pyrimidine metabolism; CTP biosynthesis via de novo pathway; CTP from UDP: step 2/2. With respect to regulation, allosterically activated by GTP, when glutamine is the substrate; GTP has no effect on the reaction when ammonia is the substrate. The allosteric effector GTP functions by stabilizing the protein conformation that binds the tetrahedral intermediate(s) formed during glutamine hydrolysis. Inhibited by the product CTP, via allosteric rather than competitive inhibition. In terms of biological role, catalyzes the ATP-dependent amination of UTP to CTP with either L-glutamine or ammonia as the source of nitrogen. Regulates intracellular CTP levels through interactions with the four ribonucleotide triphosphates. This is CTP synthase from Saccharophagus degradans (strain 2-40 / ATCC 43961 / DSM 17024).